A 255-amino-acid polypeptide reads, in one-letter code: MNTFLIIDGMNLVRRMHAAQPNENDVNGLDIRVGSACKKLVKYHQPTHVAVVWDGDDISWRKHLFEDYKKGRKPMPEALSNTLPALKSYLAEQGVNSIDAASEADDVIATLASKLVANGGKAIIVSTDKGFTQLSDPYIQRWDHFNQHYMTIEEREEKLGVEHSQFIDYLALAGDSGNKIPGVPGIGPKSAIELLRTFRSLANIYASLDKIGAKQAKKLEAGKQMARLSYKLVQLQTDIPLNINLSQFRLPNPNA.

D105 is a binding site for Mg(2+). The 5'-3' exonuclease domain occupies 162-253 (EHSQFIDYLA…NLSQFRLPNP (92 aa)). Residues L172, A173, P181, V183, and I186 each contribute to the K(+) site. The interval 185-190 (GIGPKS) is interaction with DNA.

Belongs to the Xni family. Mg(2+) is required as a cofactor. The cofactor is K(+).

In terms of biological role, has flap endonuclease activity. During DNA replication, flap endonucleases cleave the 5'-overhanging flap structure that is generated by displacement synthesis when DNA polymerase encounters the 5'-end of a downstream Okazaki fragment. The sequence is that of Flap endonuclease Xni from Shewanella sediminis (strain HAW-EB3).